The chain runs to 139 residues: Chorion protein S16 (139 aa).

The first 21 residues, 1–21 (MSVNYMRLLCLMACCFSVCLA), serve as a signal peptide directing secretion.

It belongs to the chorion protein S16 family.

It localises to the secreted. Its function is as follows. Chorion membrane (egg shell) protein; plays a role in protecting the egg from the environment. The polypeptide is Chorion protein S16 (Cp16) (Drosophila virilis (Fruit fly)).